The primary structure comprises 1521 residues: Lysophospholipase NTE1 (1521 aa).

Over 1 to 50 (MDVVNSTARAAVTSATAVTAVTGTGDRHPNPLSSAVAAASDVANAHGSSS) the chain is Cytoplasmic. The chain crosses the membrane as a helical span at residues 51 to 71 (WLGLFARVVLWLLQFVSMVLY). Residues 72-96 (YAIKLATISVPTLLYTLFSTSLTVT) are Lumenal-facing. A helical transmembrane segment spans residues 97–117 (MNATTLMLIVAAMIGAISWVV). Over 118 to 1521 (RYRYLNMYSR…RTMAPRRASI (1404 aa)) the chain is Cytoplasmic. Disordered regions lie at residues 280 to 301 (HADE…PNYP), 315 to 372 (SVPN…SAHP), and 738 to 768 (HAMD…KVDD). Composition is skewed to polar residues over residues 316–334 (VPNT…NNLP) and 738–753 (HAMD…QRSP). Residues 670–789 (PASP…GGLA) and 837–957 (RLTN…IASR) each bind a nucleoside 3',5'-cyclic phosphate. A PNPLA domain is found at 1217–1381 (LVLGGGGARG…VDNLTVSHMK (165 aa)). The GXGXXG motif lies at 1221–1226 (GGGARG). The GXSXG motif lies at 1248 to 1252 (GTSIG). Serine 1250 acts as the Nucleophile in catalysis. Residue aspartate 1368 is the Proton acceptor of the active site. A DGA/G motif is present at residues 1368–1370 (DGG).

Belongs to the NTE family.

The protein localises to the endoplasmic reticulum membrane. The enzyme catalyses a 1-acyl-sn-glycero-3-phosphocholine + H2O = sn-glycerol 3-phosphocholine + a fatty acid + H(+). With respect to regulation, inhibited by organophosphorus esters. Its function is as follows. Intracellular phospholipase B that catalyzes the double deacylation of phosphatidylcholine (PC) to glycerophosphocholine (GroPCho). Plays an important role in membrane lipid homeostasis. Responsible for the rapid PC turnover in response to inositol, elevated temperatures, or when choline is present in the growth medium. The sequence is that of Lysophospholipase NTE1 (NTE1) from Chaetomium globosum (strain ATCC 6205 / CBS 148.51 / DSM 1962 / NBRC 6347 / NRRL 1970) (Soil fungus).